The sequence spans 544 residues: Chaperonin GroEL (544 aa).

ATP is bound by residues 30-33 (TLGP), Lys51, 87-91 (DGTTT), Gly415, and Asp495.

This sequence belongs to the chaperonin (HSP60) family. As to quaternary structure, forms a cylinder of 14 subunits composed of two heptameric rings stacked back-to-back. Interacts with the co-chaperonin GroES.

It localises to the cell outer membrane. It catalyses the reaction ATP + H2O + a folded polypeptide = ADP + phosphate + an unfolded polypeptide.. In terms of biological role, together with its co-chaperonin GroES, plays an essential role in assisting protein folding. The GroEL-GroES system forms a nano-cage that allows encapsulation of the non-native substrate proteins and provides a physical environment optimized to promote and accelerate protein folding. In Neisseria gonorrhoeae, this protein is Chaperonin GroEL.